The following is a 342-amino-acid chain: Putative TPR repeat-containing protein R856 (342 aa).

TPR repeat units lie at residues valine 36–glycine 69, phenylalanine 77–methionine 110, valine 119–leucine 152, alanine 161–lysine 194, alanine 203–isoleucine 236, alanine 245–valine 278, and alanine 291–threonine 324.

In Acanthamoeba polyphaga mimivirus (APMV), this protein is Putative TPR repeat-containing protein R856.